A 151-amino-acid chain; its full sequence is MMTEEHTDLEARIIKDIHCKEIDLVNRDPKNINEDIVKVDFEDVIAEPEGTYSFDGVWKVSFTTFTVSKYWCYRLLSTLLGVPLALLWGFLFACISFCHIWAVVPCIKSYLIEIQCISHIYSLCIRTFCNPLFAALGQVCSNIKVVLRREG.

At 1–83 (MMTEEHTDLE…RLLSTLLGVP (83 aa)) the chain is on the cytoplasmic side. K38 participates in a covalent cross-link: Glycyl lysine isopeptide (Lys-Gly) (interchain with G-Cter in SUMO3). The required for interaction with DAG1 stretch occupies residues 64 to 114 (TFTVSKYWCYRLLSTLLGVPLALLWGFLFACISFCHIWAVVPCIKSYLIEI). Residues 84–104 (LALLWGFLFACISFCHIWAVV) constitute an intramembrane region (helical). Residues 105 to 151 (PCIKSYLIEIQCISHIYSLCIRTFCNPLFAALGQVCSNIKVVLRREG) lie on the Cytoplasmic side of the membrane.

Belongs to the caveolin family. In terms of assembly, homooligomer. Interacts with DYSF. Interacts with DLG1 and KCNA5; forms a ternary complex. Interacts with DAG1 (via its C-terminal); the interaction prevents binding of DAG1 with DMD. Interacts with TRIM72. Interacts with MUSK; may regulate MUSK signaling. Interacts with POPDC1. Interacts with CAVIN1, CAVIN2 and CAVIN4. Sumoylation with SUMO3 by PIAS4 may reduce agonist-induced internalization and desensitization of adrenergic receptor ABRD2. As to expression, expressed predominantly in muscle.

Its subcellular location is the golgi apparatus membrane. It is found in the cell membrane. The protein resides in the membrane. The protein localises to the caveola. It localises to the sarcolemma. In terms of biological role, may act as a scaffolding protein within caveolar membranes. Interacts directly with G-protein alpha subunits and can functionally regulate their activity. May also regulate voltage-gated potassium channels. Plays a role in the sarcolemma repair mechanism of both skeletal muscle and cardiomyocytes that permits rapid resealing of membranes disrupted by mechanical stress. Mediates the recruitment of CAVIN2 and CAVIN3 proteins to the caveolae. This Mus musculus (Mouse) protein is Caveolin-3.